We begin with the raw amino-acid sequence, 297 residues long: MIMSVPLFHGSIVALLTPMTHGEVNYQEIKNLVEYHIQAGSHGIVAMGTTGESTTLSIDEHVKVIKKTVEFADGRIPIIAGSGSNATSEAVTITKLLNGVGVVGCLSVVPYYNKPTQEGLYLHYKAIAESTELPQILYNVPSRTGCDLKPETIGRLSEIPNIIGVKEATGDLTRLPLIKTLAGEDFIFLSGDDATGLESMKLGGQGVISVTNNLAAADMAKMCELVLAGNFAEAEAINQRLIDLHHDLFIEANPIPVKWAAYKLGLISEPSLRLPLTPLSETAQPTILKALQKAGLI.

Residue threonine 50 participates in pyruvate binding. Tyrosine 138 functions as the Proton donor/acceptor in the catalytic mechanism. Lysine 166 acts as the Schiff-base intermediate with substrate in catalysis. Isoleucine 208 lines the pyruvate pocket.

The protein belongs to the DapA family. Homotetramer; dimer of dimers.

It is found in the cytoplasm. It catalyses the reaction L-aspartate 4-semialdehyde + pyruvate = (2S,4S)-4-hydroxy-2,3,4,5-tetrahydrodipicolinate + H2O + H(+). It functions in the pathway amino-acid biosynthesis; L-lysine biosynthesis via DAP pathway; (S)-tetrahydrodipicolinate from L-aspartate: step 3/4. Catalyzes the condensation of (S)-aspartate-beta-semialdehyde [(S)-ASA] and pyruvate to 4-hydroxy-tetrahydrodipicolinate (HTPA). The polypeptide is 4-hydroxy-tetrahydrodipicolinate synthase (Haemophilus ducreyi (strain 35000HP / ATCC 700724)).